Here is a 632-residue protein sequence, read N- to C-terminus: Golgin subfamily A member 8M (632 aa).

Residues 1 to 77 (MAEETQHNKL…SSATLKDLES (77 aa)) form a disordered region. Positions 38 to 50 (TNGSIPQTATSGG) are enriched in polar residues. Coiled-coil stretches lie at residues 86–154 (LDSR…HMKR) and 209–421 (KLEQ…SLMA). The span at 352 to 362 (KQEERIQEQHK) shows a compositional bias: basic and acidic residues. 3 disordered regions span residues 352-384 (KQEE…NKST), 422-456 (LPGE…REAM), and 505-524 (DAAL…DEGE). Residues 508-520 (LGGGHHQAGAQGG) show a composition bias toward gly residues.

Belongs to the GOLGA8 family.

The protein is Golgin subfamily A member 8M of Homo sapiens (Human).